The sequence spans 665 residues: Methionine--tRNA ligase (665 aa).

Positions 12 to 22 (YYPSGKLHIGS) match the 'HIGH' region motif. The 'KMSKS' region motif lies at 308–312 (KMSKS). K311 contacts ATP. The tRNA-binding domain maps to 562–665 (TFDAVEIRVA…SSVPNGSIIG (104 aa)).

It belongs to the class-I aminoacyl-tRNA synthetase family. MetG type 2B subfamily. As to quaternary structure, homodimer.

It is found in the cytoplasm. It carries out the reaction tRNA(Met) + L-methionine + ATP = L-methionyl-tRNA(Met) + AMP + diphosphate. Its function is as follows. Is required not only for elongation of protein synthesis but also for the initiation of all mRNA translation through initiator tRNA(fMet) aminoacylation. This Streptococcus pyogenes serotype M18 (strain MGAS8232) protein is Methionine--tRNA ligase (metG).